Consider the following 343-residue polypeptide: GTPase Obg (343 aa).

One can recognise an Obg domain in the interval E2–I160. The 172-residue stretch at A161–E332 folds into the OBG-type G domain. GTP-binding positions include G167–S174, F192–S196, D214–G217, N284–D287, and S313–L315. Residues S174 and T194 each contribute to the Mg(2+) site.

It belongs to the TRAFAC class OBG-HflX-like GTPase superfamily. OBG GTPase family. In terms of assembly, monomer. Mg(2+) serves as cofactor.

It localises to the cytoplasm. In terms of biological role, an essential GTPase which binds GTP, GDP and possibly (p)ppGpp with moderate affinity, with high nucleotide exchange rates and a fairly low GTP hydrolysis rate. Plays a role in control of the cell cycle, stress response, ribosome biogenesis and in those bacteria that undergo differentiation, in morphogenesis control. This Aquifex aeolicus (strain VF5) protein is GTPase Obg.